A 103-amino-acid polypeptide reads, in one-letter code: Small ribosomal subunit protein uS10 (103 aa).

It belongs to the universal ribosomal protein uS10 family. As to quaternary structure, part of the 30S ribosomal subunit.

Involved in the binding of tRNA to the ribosomes. The chain is Small ribosomal subunit protein uS10 from Marinomonas sp. (strain MWYL1).